The following is a 204-amino-acid chain: MIKIVDYGLGNIQAFANLYKRLHIPVVVARTADELAGATKIILPGVGAFDHAMARLNESGMREILESLVQKDKVPVLGICVGMQMLANSSDEGVLPGLGWVPGRVREFRNIPGLEGIAQPHMGWNDVKPVVSSGLFKGLETDARFYFLHSFFFECQNPDYSLASANYGLEFSCAVANRNVYGVQFHPEKSHDFGMTLLKNFSEI.

The Glutamine amidotransferase type-1 domain maps to 1–204; sequence MIKIVDYGLG…MTLLKNFSEI (204 aa). The Nucleophile role is filled by C80. Active-site residues include H186 and E188.

As to quaternary structure, heterodimer of HisH and HisF.

It localises to the cytoplasm. The catalysed reaction is 5-[(5-phospho-1-deoxy-D-ribulos-1-ylimino)methylamino]-1-(5-phospho-beta-D-ribosyl)imidazole-4-carboxamide + L-glutamine = D-erythro-1-(imidazol-4-yl)glycerol 3-phosphate + 5-amino-1-(5-phospho-beta-D-ribosyl)imidazole-4-carboxamide + L-glutamate + H(+). The enzyme catalyses L-glutamine + H2O = L-glutamate + NH4(+). The protein operates within amino-acid biosynthesis; L-histidine biosynthesis; L-histidine from 5-phospho-alpha-D-ribose 1-diphosphate: step 5/9. In terms of biological role, IGPS catalyzes the conversion of PRFAR and glutamine to IGP, AICAR and glutamate. The HisH subunit catalyzes the hydrolysis of glutamine to glutamate and ammonia as part of the synthesis of IGP and AICAR. The resulting ammonia molecule is channeled to the active site of HisF. The sequence is that of Imidazole glycerol phosphate synthase subunit HisH from Bdellovibrio bacteriovorus (strain ATCC 15356 / DSM 50701 / NCIMB 9529 / HD100).